Reading from the N-terminus, the 141-residue chain is Cystatin-S (141 aa).

An N-terminal signal peptide occupies residues 1–27 (MAYLLHAQLFLLTTFILVLNMRLCPVL). The Secondary area of contact signature appears at 76 to 80 (QVVAG). Disulfide bonds link cysteine 94–cysteine 104 and cysteine 118–cysteine 138.

Belongs to the cystatin family. As to expression, found in saliva, tears, urine and seminal fluid.

Its subcellular location is the secreted. This protein strongly inhibits papain and ficin, partially inhibits stem bromelain and bovine cathepsin C, but does not inhibit porcine cathepsin B or clostripain. Papain is inhibited non-competitively. The polypeptide is Cystatin-S (Cst4) (Rattus norvegicus (Rat)).